The primary structure comprises 158 residues: Small ribosomal subunit protein uS7 (158 aa).

This sequence belongs to the universal ribosomal protein uS7 family. Part of the 30S ribosomal subunit. Contacts proteins S9 and S11.

One of the primary rRNA binding proteins, it binds directly to 16S rRNA where it nucleates assembly of the head domain of the 30S subunit. Is located at the subunit interface close to the decoding center, probably blocks exit of the E-site tRNA. The sequence is that of Small ribosomal subunit protein uS7 from Flavobacterium johnsoniae (strain ATCC 17061 / DSM 2064 / JCM 8514 / BCRC 14874 / CCUG 350202 / NBRC 14942 / NCIMB 11054 / UW101) (Cytophaga johnsonae).